Here is a 256-residue protein sequence, read N- to C-terminus: Protein YABBY 4 (256 aa).

Residues 30 to 57 (CNCCDTILAVGVPCSSLFKTVTVRCGHC) form a C4-type zinc finger. Residues 127–168 (SCASNAPAMQMPPAKPVQQEPELPKNAPASANRPPEKRQRVP) form a disordered region.

This sequence belongs to the YABBY family. In terms of tissue distribution, preferentially expressed in immature organs containing meristems and organ primordia. Expressed in phloem of developing vascular tissues of young seedling shoots. Expressed in the phloem of midvein vasculature of young leaves. Does not show polar expression pattern in leaf primordia.

It localises to the nucleus. Its function is as follows. Seems to be associated with phloem cell differentiation. In Oryza sativa subsp. japonica (Rice), this protein is Protein YABBY 4 (YAB4).